Consider the following 323-residue polypeptide: Cuticle collagen 39 (323 aa).

A signal peptide spans 1-28 (MTGPTCLAVVAGISGVFVFGALFSVAQI). A compositionally biased stretch (polar residues) spans 80 to 89 (QCNCGPQASN). A disordered region spans residues 80-293 (QCNCGPQASN…GAAEQGYRHR (214 aa)). Triple-helical region regions lie at residues 93–125 (GPPG…AGPK), 138–200 (GSPG…GGQR), and 203–265 (GLPG…PGAD). A compositionally biased stretch (gly residues) spans 108–117 (GQPGGAGNPG). Residues 136 to 146 (PAGSPGPAGAP) show a composition bias toward low complexity. The span at 159-168 (GHPGQGGSQG) shows a compositional bias: gly residues. Residues 169–191 (PAGPRGPAGDAGAPGQVGAPGNP) are compositionally biased toward low complexity. The segment covering 224-233 (GQSGGQGQQG) has biased composition (gly residues). Over residues 234-267 (PAGPAGPDGQPGQPGQDGQAGAPGNDGAPGADAA) the composition is skewed to low complexity.

Belongs to the cuticular collagen family. Collagen polypeptide chains are complexed within the cuticle by disulfide bonds and other types of covalent cross-links.

Functionally, nematode cuticles are composed largely of collagen-like proteins. The cuticle functions both as an exoskeleton and as a barrier to protect the worm from its environment. The sequence is that of Cuticle collagen 39 (col-39) from Caenorhabditis elegans.